Reading from the N-terminus, the 807-residue chain is Ribosome-releasing factor 2, mitochondrial (807 aa).

A mitochondrion-targeting transit peptide spans 1–18 (MFCRKYAFQTWKQFSRFY). The region spanning 27–315 (SKTRNIGIIA…GITKYLPSPL (289 aa)) is the tr-type G domain. Residues 36–43 (AHIDAGKT), 100–104 (DTPGH), and 154–157 (NKMD) contribute to the GTP site.

The protein belongs to the TRAFAC class translation factor GTPase superfamily. Classic translation factor GTPase family. EF-G/EF-2 subfamily.

The protein localises to the mitochondrion. Its function is as follows. Mitochondrial GTPase that mediates the disassembly of ribosomes from messenger RNA at the termination of mitochondrial protein biosynthesis. Not involved in the GTP-dependent ribosomal translocation step during translation elongation. The protein is Ribosome-releasing factor 2, mitochondrial of Candida dubliniensis (strain CD36 / ATCC MYA-646 / CBS 7987 / NCPF 3949 / NRRL Y-17841) (Yeast).